Consider the following 1022-residue polypeptide: ATPase MORC2B (1022 aa).

Ala-2 is subject to N-acetylalanine. Residues Asn-39, 87–89 (SAK), and 99–105 (RYGNGLK) contribute to the ATP site. Asn-39 is a Mg(2+) binding site. Positions 285–362 (KTRAEQEVKK…RDAKQQALKE (78 aa)) form a coiled coil. Lys-427 provides a ligand contact to ATP. A CW-type zinc finger spans residues 490 to 544 (AMQVPTTIQCDLCLKWRTLPFQLSAVEEGYPINWVCSMNPDPEQDQCEAFELKQK). Zn(2+) is bound by residues Cys-499, Cys-502, Cys-525, and Cys-536. Positions 555–583 (KTQEERQKQLTEKIQQEQRKLKALKKIKP) form a coiled coil. Residue Ser-615 is modified to Phosphoserine. Lys-649 is covalently cross-linked (Glycyl lysine isopeptide (Lys-Gly) (interchain with G-Cter in SUMO2)). Phosphoserine occurs at positions 690, 724, 733, and 737. A Glycyl lysine isopeptide (Lys-Gly) (interchain with G-Cter in SUMO2) cross-link involves residue Lys-758. Ser-768 and Ser-770 each carry phosphoserine. At Thr-827 the chain carries Phosphothreonine. 2 positions are modified to phosphoserine: Ser-846 and Ser-851. A Glycyl lysine isopeptide (Lys-Gly) (interchain with G-Cter in SUMO2) cross-link involves residue Lys-922. A coiled-coil region spans residues 962–1001 (QAKVSEESLRISQKKLQETEEKLQKLRTNIQTLLQMAQQG).

Interacts with Morc2a. In terms of tissue distribution, protein is abundant in testes but not detected in other adult tissues examined (at protein level). Detected in germ cells with a distinct developmental-specific expression pattern but not in somatic cells such as Sertoli cells.

The protein resides in the nucleus. The catalysed reaction is ATP + H2O = ADP + phosphate + H(+). In terms of biological role, required for chromosomal synapsis and meiotic recombination in males and females. This chain is ATPase MORC2B, found in Mus musculus (Mouse).